The following is a 405-amino-acid chain: Macrolide efflux protein A (405 aa).

Helical transmembrane passes span isoleucine 14–phenylalanine 34, methionine 48–valine 68, isoleucine 76–methionine 98, serine 145–tryptophan 165, asparagine 168–valine 188, phenylalanine 222–phenylalanine 242, isoleucine 259–glycine 279, isoleucine 285–leucine 305, phenylalanine 310–valine 330, leucine 350–alanine 370, and isoleucine 373–cysteine 393.

Belongs to the major facilitator superfamily. Drug:H(+) antiporter-3 (DHA3) (TC 2.A.1.21) family.

Its subcellular location is the cell membrane. Functionally, confers resistance to 14-membered macrolides including erythromycin and to 15-membered macrolides but not to 16-membered macrolides, lincosamides or analogs of streptogramin B. May function as an efflux pump to regulate intracellular macrolide levels. The sequence is that of Macrolide efflux protein A from Streptococcus pyogenes serotype M6 (strain ATCC BAA-946 / MGAS10394).